A 447-amino-acid chain; its full sequence is Phosphoglucosamine mutase (447 aa).

The active-site Phosphoserine intermediate is the Ser103. Residues Ser103, Asp242, Asp244, and Asp246 each contribute to the Mg(2+) site. Position 103 is a phosphoserine (Ser103).

The protein belongs to the phosphohexose mutase family. Mg(2+) serves as cofactor. Activated by phosphorylation.

It catalyses the reaction alpha-D-glucosamine 1-phosphate = D-glucosamine 6-phosphate. Its function is as follows. Catalyzes the conversion of glucosamine-6-phosphate to glucosamine-1-phosphate. The polypeptide is Phosphoglucosamine mutase (Dinoroseobacter shibae (strain DSM 16493 / NCIMB 14021 / DFL 12)).